The following is a 368-amino-acid chain: Single-stranded DNA-binding protein 3 (368 aa).

The region spanning Ala16 to Lys48 is the LisH domain. The segment at Pro100–Val368 is disordered. Residues Gly126–Asn139 are compositionally biased toward pro residues. Composition is skewed to low complexity over residues Pro174–Met189, Gly211–Gly220, and Pro230–Gly248. The segment covering Gly252–Pro262 has biased composition (pro residues). Residues Ala265 to Thr276 show a composition bias toward polar residues. Positions Gly295–Gly305 are enriched in gly residues. The span at Asn326–Pro337 shows a compositional bias: low complexity. The segment covering His353 to Val368 has biased composition (polar residues).

In terms of tissue distribution, expressed in embryonic fibroblasts and chondrocytes.

The protein localises to the nucleus. Its function is as follows. May be involved in transcription regulation of the alpha 2(I) collagen gene where it binds to the single-stranded polypyrimidine sequences in the promoter region. This Gallus gallus (Chicken) protein is Single-stranded DNA-binding protein 3 (SSBP3).